The primary structure comprises 514 residues: MSHNAPLVLMILDGWGYNENDRYNAIAKANTPQWDEWWQTCPHILLKASGLPVGLPDEQMGNSEVGHMHIGAGRVIQQDFTRINEAINNGKFAKNAVFHEVIDQLKKTEKSLHIMGLLSPGGVHSHEQHLFALLALCNQKKFRSVHLHLFLDGRDTPPQSALDSLKCLNEELAKHPVATINSICGRYYAMDRDKRWERVEPVYNLLTQGKSERQFPDAETAIHFYYKNKISDEFVPPTLIGKEHSIQDGDAVLFFNFRADRARQLTSTFLDPLFKGFERKTLPKLSCFVSMTQYDKNLFTTTAFPPVPLNNTLGEVLSSHGLSQLRIAETEKYAHVTFFFNGGCESVFTNEERIMVPSPQVATYDLQPEMSAHELTKTLIAAINSRDYHVIICNYANADMVGHTGNFEATVQAIECLDQCMQQVWQALKNNGGKLLITADHGNAEEMFSEATNQAHTAHTSEPVPFLYVGGGWHFTHSEGSLIDIAPSLLALLGITPPPEMTGRILLEKNHAHA.

Residues aspartate 13 and serine 63 each coordinate Mn(2+). Serine 63 (phosphoserine intermediate) is an active-site residue. Substrate is bound by residues histidine 124, 154–155 (RD), arginine 186, arginine 192, 258–261 (RADR), and lysine 332. Positions 399, 403, 440, 441, and 459 each coordinate Mn(2+).

This sequence belongs to the BPG-independent phosphoglycerate mutase family. In terms of assembly, monomer. The cofactor is Mn(2+).

The enzyme catalyses (2R)-2-phosphoglycerate = (2R)-3-phosphoglycerate. It participates in carbohydrate degradation; glycolysis; pyruvate from D-glyceraldehyde 3-phosphate: step 3/5. Catalyzes the interconversion of 2-phosphoglycerate and 3-phosphoglycerate. This Legionella pneumophila (strain Paris) protein is 2,3-bisphosphoglycerate-independent phosphoglycerate mutase.